Consider the following 110-residue polypeptide: uncharacterized protein (110 aa).

The tract at residues 1-72 (MWRSSNQRGV…NHRNIHLRNP (72 aa)) is disordered. Residues 10–23 (VSRRRDKSMRKYTR) show a composition bias toward basic residues. The segment covering 48–57 (KNTYTGNISS) has biased composition (polar residues).

This is an uncharacterized protein from Human herpesvirus 6A (strain Uganda-1102) (HHV-6 variant A).